A 161-amino-acid chain; its full sequence is Cyclic pyranopterin monophosphate synthase (161 aa).

Substrate is bound by residues 75–77 (MCH) and 115–116 (ME). The active site involves Asp-130.

Belongs to the MoaC family. As to quaternary structure, homohexamer; trimer of dimers.

The catalysed reaction is (8S)-3',8-cyclo-7,8-dihydroguanosine 5'-triphosphate = cyclic pyranopterin phosphate + diphosphate. Its pathway is cofactor biosynthesis; molybdopterin biosynthesis. Its function is as follows. Catalyzes the conversion of (8S)-3',8-cyclo-7,8-dihydroguanosine 5'-triphosphate to cyclic pyranopterin monophosphate (cPMP). The polypeptide is Cyclic pyranopterin monophosphate synthase (Bacillus thuringiensis subsp. konkukian (strain 97-27)).